The following is a 486-amino-acid chain: Protein nucleotidyltransferase YdiU (486 aa).

8 residues coordinate ATP: Gly-90, Gly-92, Arg-93, Lys-113, Asp-125, Gly-126, Arg-176, and Arg-183. Asp-252 (proton acceptor) is an active-site residue. Residues Asn-253 and Asp-262 each coordinate Mg(2+). Asp-262 lines the ATP pocket.

The protein belongs to the SELO family. It depends on Mg(2+) as a cofactor. Mn(2+) serves as cofactor.

It catalyses the reaction L-seryl-[protein] + ATP = 3-O-(5'-adenylyl)-L-seryl-[protein] + diphosphate. It carries out the reaction L-threonyl-[protein] + ATP = 3-O-(5'-adenylyl)-L-threonyl-[protein] + diphosphate. The enzyme catalyses L-tyrosyl-[protein] + ATP = O-(5'-adenylyl)-L-tyrosyl-[protein] + diphosphate. The catalysed reaction is L-histidyl-[protein] + UTP = N(tele)-(5'-uridylyl)-L-histidyl-[protein] + diphosphate. It catalyses the reaction L-seryl-[protein] + UTP = O-(5'-uridylyl)-L-seryl-[protein] + diphosphate. It carries out the reaction L-tyrosyl-[protein] + UTP = O-(5'-uridylyl)-L-tyrosyl-[protein] + diphosphate. In terms of biological role, nucleotidyltransferase involved in the post-translational modification of proteins. It can catalyze the addition of adenosine monophosphate (AMP) or uridine monophosphate (UMP) to a protein, resulting in modifications known as AMPylation and UMPylation. This is Protein nucleotidyltransferase YdiU from Pseudomonas putida (strain ATCC 700007 / DSM 6899 / JCM 31910 / BCRC 17059 / LMG 24140 / F1).